Consider the following 1198-residue polypeptide: Structural polyprotein (1198 aa).

Positions 2–15 (TKKPGGPGKNRAIN) are interaction with host EXOC1. The hydrophobic; homodimerization of capsid protein C stretch occupies residues 37–72 (LLDGRGPVRFVLALITFFKFTALAPTKALLGRWKAV). Positions 106-127 (GGNEGSIMWLASLAVVIACAGA) are cleaved as a propeptide — ER anchor for the capsid protein C, removed in mature form by serine protease NS3. The chain crosses the membrane as a helical span at residues 110-130 (GSIMWLASLAVVIACAGAMKL). Asparagine 142 is a glycosylation site (N-linked (GlcNAc...) asparagine; by host). Transmembrane regions (helical) follow at residues 254-274 (WIIR…MLGS) and 280-294 (VVFT…PAYS). 6 cysteine pairs are disulfide-bonded: cysteine 297–cysteine 324, cysteine 354–cysteine 410, cysteine 354–cysteine 415, cysteine 368–cysteine 399, cysteine 386–cysteine 410, and cysteine 386–cysteine 415. A fusion peptide region spans residues 392–405 (DRGWGNGCGLFGKG). N-linked (GlcNAc...) asparagine; by host glycosylation occurs at asparagine 448. 2 disulfides stabilise this stretch: cysteine 484-cysteine 581 and cysteine 598-cysteine 629. 2 helical membrane passes run 747–767 (FGGM…WMGV) and 774–794 (IALA…NVHA). Intrachain disulfides connect cysteine 798/cysteine 809, cysteine 849/cysteine 937, cysteine 973/cysteine 1017, cysteine 1074/cysteine 1123, cysteine 1085/cysteine 1106, and cysteine 1107/cysteine 1110. Asparagine 924 and asparagine 1001 each carry an N-linked (GlcNAc...) asparagine; by host glycan. Residues 1151 to 1177 (MVDPFSAGPSGDVSGHPGSPSQEVDGQ) are disordered.

As to quaternary structure, homodimer. Interacts (via N-terminus) with host EXOC1 (via C-terminus); this interaction results in EXOC1 degradation through the proteasome degradation pathway. Interacts with host CAPRIN1; this interaction is involved in the suppression of the integrated stress response. Forms heterodimers with envelope protein E in the endoplasmic reticulum and Golgi. In terms of assembly, homodimer; in the endoplasmic reticulum and Golgi. Interacts with protein prM. Interacts with non-structural protein 1. Post-translationally, genome polyprotein: Specific enzymatic cleavages in vivo yield mature proteins. Cleavages in the lumen of endoplasmic reticulum are performed by host signal peptidase, whereas cleavages in the cytoplasmic side are performed by serine protease NS3. Signal cleavage at the 2K-4B site requires a prior NS3 protease-mediated cleavage at the 4A-2K site. Cleaved in post-Golgi vesicles by a host furin, releasing the mature small envelope protein M, and peptide pr. This cleavage is incomplete as up to 30% of viral particles still carry uncleaved prM. In terms of processing, N-glycosylated.

It is found in the secreted. The protein resides in the virion membrane. Its subcellular location is the host endoplasmic reticulum membrane. Functionally, plays a role in virus budding by binding to the cell membrane and gathering the viral RNA into a nucleocapsid that forms the core of a mature virus particle. During virus entry, may induce genome penetration into the host cytoplasm after hemifusion induced by the surface proteins. Can migrate to the cell nucleus where it modulates host functions. Overcomes the anti-viral effects of host EXOC1 by sequestering and degrading the latter through the proteasome degradation pathway. Inhibits the integrated stress response (ISR) in the infected cell by binding to host CAPRIN1. Inhibits RNA silencing by interfering with host Dicer. Its function is as follows. Prevents premature fusion activity of envelope proteins in trans-Golgi by binding to envelope protein E at pH6.0. After virion release in extracellular space, gets dissociated from E dimers. In terms of biological role, acts as a chaperone for envelope protein E during intracellular virion assembly by masking and inactivating envelope protein E fusion peptide. prM is the only viral peptide matured by host furin in the trans-Golgi network probably to avoid catastrophic activation of the viral fusion activity in acidic Golgi compartment prior to virion release. prM-E cleavage is inefficient, and many virions are only partially matured. These uncleaved prM would play a role in immune evasion. Functionally, may play a role in virus budding. Exerts cytotoxic effects by activating a mitochondrial apoptotic pathway through M ectodomain. May display a viroporin activity. Binds to host cell surface receptor and mediates fusion between viral and cellular membranes. Envelope protein is synthesized in the endoplasmic reticulum in the form of heterodimer with protein prM. They play a role in virion budding in the ER, and the newly formed immature particle is covered with 60 spikes composed of heterodimer between precursor prM and envelope protein E. The virion is transported to the Golgi apparatus where the low pH causes dissociation of PrM-E heterodimers and formation of E homodimers. prM-E cleavage is inefficient, and many virions are only partially matured. These uncleaved prM would play a role in immune evasion. Its function is as follows. May play a role in neuroinvasiveness. This chain is Structural polyprotein, found in Ardeidae (herons).